Here is a 522-residue protein sequence, read N- to C-terminus: Transactivator/viroplasmin protein (522 aa).

Residues 488-522 form a disordered region; it reads DASADEGTTDKSGPPPTRSIVEKEDVPNTSSKQVD.

It belongs to the caulimoviridae viroplasmin family.

It is found in the host cytoplasm. Its function is as follows. Enhances the ribosomal termination-reinitiation event leading to the translation of major open reading frames on the polycistronic viral RNAs. This is Transactivator/viroplasmin protein from Cauliflower mosaic virus (strain D/H) (CaMV).